Here is a 420-residue protein sequence, read N- to C-terminus: Torsin-4A-A (420 aa).

Residues cysteine 130–aspartate 150 traverse the membrane as a helical segment. Glycine 202–serine 209 contacts ATP.

It belongs to the ClpA/ClpB family. Torsin subfamily.

The protein resides in the membrane. The polypeptide is Torsin-4A-A (tor4a-a) (Xenopus laevis (African clawed frog)).